The following is a 317-amino-acid chain: ADP-L-glycero-D-manno-heptose-6-epimerase (317 aa).

NADP(+) contacts are provided by residues 10–11 (FI), 31–32 (DD), lysine 38, lysine 53, 76–80 (QGACS), and asparagine 93. The active-site Proton acceptor is the tyrosine 140. An NADP(+)-binding site is contributed by lysine 144. Asparagine 169 is a substrate binding site. Positions 170 and 178 each coordinate NADP(+). Catalysis depends on lysine 178, which acts as the Proton acceptor. Residues alanine 180, histidine 187, 201–204 (FEGC), arginine 214, and tyrosine 278 contribute to the substrate site.

It belongs to the NAD(P)-dependent epimerase/dehydratase family. HldD subfamily. As to quaternary structure, homopentamer. NADP(+) serves as cofactor.

The catalysed reaction is ADP-D-glycero-beta-D-manno-heptose = ADP-L-glycero-beta-D-manno-heptose. Its pathway is nucleotide-sugar biosynthesis; ADP-L-glycero-beta-D-manno-heptose biosynthesis; ADP-L-glycero-beta-D-manno-heptose from D-glycero-beta-D-manno-heptose 7-phosphate: step 4/4. In terms of biological role, catalyzes the interconversion between ADP-D-glycero-beta-D-manno-heptose and ADP-L-glycero-beta-D-manno-heptose via an epimerization at carbon 6 of the heptose. This Nitrosococcus oceani (strain ATCC 19707 / BCRC 17464 / JCM 30415 / NCIMB 11848 / C-107) protein is ADP-L-glycero-D-manno-heptose-6-epimerase.